A 174-amino-acid chain; its full sequence is Urease accessory protein UreE (174 aa).

Residues 146–174 (NGAYATGGHAHDHDGEPEHVHGPGCQHAH) form a disordered region. Residues 154 to 166 (HAHDHDGEPEHVH) are compositionally biased toward basic and acidic residues.

Belongs to the UreE family.

Its subcellular location is the cytoplasm. In terms of biological role, involved in urease metallocenter assembly. Binds nickel. Probably functions as a nickel donor during metallocenter assembly. The chain is Urease accessory protein UreE from Albidiferax ferrireducens (strain ATCC BAA-621 / DSM 15236 / T118) (Rhodoferax ferrireducens).